Reading from the N-terminus, the 96-residue chain is Small ribosomal subunit protein bS6 (96 aa).

Belongs to the bacterial ribosomal protein bS6 family.

In terms of biological role, binds together with bS18 to 16S ribosomal RNA. The sequence is that of Small ribosomal subunit protein bS6 from Streptococcus equi subsp. equi (strain 4047).